The chain runs to 295 residues: Nucleotide-binding protein LACR_1047 (295 aa).

12–19 lines the ATP pocket; that stretch reads GMSGAGKT. 63-66 lines the GTP pocket; it reads DMRS.

It belongs to the RapZ-like family.

Functionally, displays ATPase and GTPase activities. The protein is Nucleotide-binding protein LACR_1047 of Lactococcus lactis subsp. cremoris (strain SK11).